The primary structure comprises 2893 residues: MAFSCGTLSYSAVAQAPSVAYAPRTWEVDEARRRRVIKRLALEQERIRNVLDVAVYDQATWEQEDARDNEFLTEQLNNLYTIYSIAERCTRRPIKEXSPISVSNRFAPLESLKVEVGQEAXECXFKKPKYTRXCKKVKRVATRFVREKVVRPMCSRSPMLLFKLKKIIYDLHLYRLRKQIRMLRRQKQRDYELECVTNLLQLSNPVQAKPEMDNPNPGPDGEGEVELEKDSNVVLTTQRDPSTSIPAPVSVKWSRWTSNDVVDDYATITSRWYQIAEFVWSKDDPFDKELARLILPRALLSSIEANSDAICDVPNTIPFKVHAYWRGDMEVRVQINSNKFQVGQLQATWYYSDHENLNISSKRSVYGFSQMDHALISASASNEAKLVIPYKHVYPFLPTRIVPDWTTGILDMGALNIRVIAPLRMSATGPTTCNVVVFIKLNNSEFTGTSSGKFYASQIRAKPEMDRILNLAEGLLNNTIGGNNMDNPSYQQSPRHFVPTGMHSLALGTNLVEPLHALRLDAAGTTQHPVGCAPDEDMTVSSIASRYGLIRRVQWKKDHAKGSLLLQLDADPFVEQRIEGTNPISLYWFAPVGVVSSMFMQWRGSLEYRFDIIASQFHTGRLIVGYVPGLTASLQLQMDYMKLKSSSYVVFDLQESNSFTFEVPYVSYRPWWVRKYGGNYLPSSTDAPSTLFMYVQVPLIPMEAVSDTIDINVYVRGGSSFEVCVPVQPSLGLNWNTDFILRNDEEYRAKTGYAPYYAGVWHSFNNSNSLVFRWGSXSDQIAQWPTISVPRGELAFLRIKDGKQAAVGTQPWRTMVVWPSGHGYNIGIPTYNAERARQLAQHLYGGGSLTDEKAKQLFVPANQQGPGKVSNGNPVWEVMRAPLATQRAHIQDFEFIEAIPEGEESRNTTVLDTTTTLQSSGFGRAFFGEAFNDLKTLMRRYQLYGQLLLSVTTDKDIDHCMFTFPCLPQGLALDIGSAGSPHEIFNRCRDGIIPLIASGYRFYRGDLRYKIVFPSNVNSNIWVQHRPDRRLEGWSAAKIVNCDAVSTGQGVYNHGYASHIQITRVNNVIELEVPFYNATCYNYLQAFNASSAASSYAVSLGEISVGFQATSDDIASIVNKPVTIYYSIGDGMQFSQWVGYQPMMILDQLPAPVVRAVPEGPIAKIKNFFHQTADEVREAQAAKMREDMGMVVQDVIGELSQAIPDLQQPEVQANVFSLVSQLVHAIIGTSLKTVAWAIVSIFVTLGLIGREMMHSVITVVKRLLEKYHLATQPQESASSSTVISAVPEAPNAEAEEASAWVSIIYNGVCNMLNVAAQKPKQFKDWVKLATVDFSNNCRGSNQVFVFFKNTFEVLKKMWGYVFCQSNPAARLLKAVNDEPEILKAWVKECLYLDDPKFRMRRAHDQEYIERVFAAHSYGQILLHDLTAEMNQSRNLSVFTRVYDQISKLKTDLMEMGSNPYIRRECFTICMCGASGIGKSYLTDSLCSELLRASRTPVTTGIKCVVNPLSDYWDQCDFQPVLCVDDMWSVETSTTLDKQLNMLFQVHSPIVLSPPKADLEGKKMRYNPEIFIYNTNKPFPRFDRIAMEAIYRRRNVLIECKASEEKKRGCKHCENDIPIAECSPKMLKDFHHIKFRYAHDVCNSETTWSEWMTYNEFLEWITPVYMANRRKANESFKMRVDEMQMLRMDEPLEGDNILNKYVEVNQRLVEEMKAFKERTLWSDLHRVGAEISASVKKALPTISITEKLPHWTVQCGIAKPEMDHAYEVMSSYAAGMNAEIEAHEQVRRSSVECQFAEPQAXRNPDDEGPTIDEELMGDTEFTSQALERLVDEGYITGKQKKYIAMWCSKRREHTADFDLVWTDNLRVLSAYVHERSSSTRLSTDDVKLYKTISMLHQKYDTTECAKCQHWYAPLTDIYVDDKKLFWCQKEKKTLIDVRKLSKEDVTVQSKLXNLSVPCGEVCMLHSKYFNYLFHKAWLFENPTWRLIYNGTKKGMPEYFMNCVDEISLDSKFGKVKVWLQAIIDKYLTRPVKMIRDFLFKWWPQVAYVLSLLGIIGITAYEMRNPKPTSEELADHYVNRHCSSDFWSPGLASPQGLKYSEAVTVKAPRIHRLPVTTKPQGSTQQVDAAVNKILQNMVYIGVVFPKVPGSKWRDINFRCLMLHNRQCLMLRHYIESTAAFPEGTKYYFKYIHNQETRMSGDISGIEIDLLNLPRLYYGGLAGEESFDSNIVLVTMPNRIPECKSIIKFIASHNEHIRAQNDGVLVTGDHTQLLAFENNNKTPISINADGLYEVILQGVYTYPYHGDGVCGSILLSRNLQRPIIGIHVAGTEGLHGFGVAEPLVHEMFTGKAIESEREPYDRVYELPLRELDESDIGLDTDLYPIGRVDAKLAHAQSPSTGIKKTLIHGTFDVRTEPNPMSSRDPRIAPHDPLKLGCEKHGMPCSPFNRKHLELATNHLKEKLVSVVKPINGCKIRSLQDAXCGVPGLDGFDSISWNTSAGFPLSSLKPPGTSGKRWLFDIELQDSGCYLLRGMRPELEIQLSTTQLMRKKGIKPHTIFTDCLKDTCLPVEKCRIPGKTRIFSISPVQFTIPFRQYYLDFMASYRAARLNAEHGIGIDVNSLEWTNLATRLSKXGTHIVTGDYKNFGPGLDSDVAASAFEIIIDWVLHYTEEDNKDEMKRVMWTMAQEILAPSHLYRDLVYRVPCGIPSGSPITDILNTISNCLLIRLAWLGITDLPLSEFSQNVVLVCYGDDLIMNVSDNMIDKFNAVTIGKFFSQYKMEFTDQDKSGNTVKWRTLQTATFLKHGFLKHPTRPVFLANLDKVSVEGTTNWTHARGLGRRTATIENAKQALELAFGWGPEYFNYVRNTIKMAFDKLGIYEDLITWEEMDVRCYASA.

The tract at residues 206–226 (VQAKPEMDNPNPGPDGEGEVE) is disordered. An SF3 helicase domain is found at 1446–1612 (SKLKTDLMEM…EEKKRGCKHC (167 aa)). 1472–1479 (GASGIGKS) provides a ligand contact to ATP. A Peptidase C3 domain is found at 2119-2345 (GSTQQVDAAV…VAEPLVHEMF (227 aa)). Catalysis depends on for 3C-like protease activity residues His-2170, Asn-2227, and Cys-2307. Positions 2633–2763 (THIVTGDYKN…NVSDNMIDKF (131 aa)) constitute a RdRp catalytic domain.

Post-translationally, specific enzymatic cleavages in vivo by the viral 3C-like protease yield three mature proteins. 3C-like protease is cleaved autocatalytically.

Its subcellular location is the virion. It catalyses the reaction RNA(n) + a ribonucleoside 5'-triphosphate = RNA(n+1) + diphosphate. It carries out the reaction ATP + H2O = ADP + phosphate + H(+). Inhibited by Rupintrivir. Capsid protein that assembles with the capsid proteins VP1 and VP3 to form a pseudo-T3 icosahedral capsid of about 40 nm. Its function is as follows. Capsid protein that assembles with the capsid proteins VP1 and VP2 to form a pseudo T3 icosahedral capsid of about 40 nm. Functionally, capsid protein that assembles with the capsid proteins VP2 and VP3 to form a pseudo T3 icosahedral capsid of about 40 nm. In terms of biological role, displays RNA helix destabilizing and strand annealing acceleration activity. This activity is necessary at several points during genome replication, for example to separate duplexes that form after genome replication. Cysteine protease that generates mature viral proteins from the precursor polyprotein. Its function is as follows. Replicates genomic and antigenomic RNA. The sequence is that of Genome polyprotein from Deformed wing virus (DWV).